The chain runs to 445 residues: Glutamate--tRNA ligase 2 (445 aa).

Residues 10–20 (PSPTGRLHVGN) carry the 'HIGH' region motif. The short motif at 241–245 (ALSKR) is the 'KMSKS' region element. Lys-244 is a binding site for ATP.

It belongs to the class-I aminoacyl-tRNA synthetase family. Glutamate--tRNA ligase type 1 subfamily. Monomer.

Its subcellular location is the cytoplasm. The catalysed reaction is tRNA(Glu) + L-glutamate + ATP = L-glutamyl-tRNA(Glu) + AMP + diphosphate. Its function is as follows. Catalyzes the attachment of glutamate to tRNA(Glu) in a two-step reaction: glutamate is first activated by ATP to form Glu-AMP and then transferred to the acceptor end of tRNA(Glu). The polypeptide is Glutamate--tRNA ligase 2 (Hyphomonas neptunium (strain ATCC 15444)).